A 217-amino-acid chain; its full sequence is Large ribosomal subunit protein uL3 (217 aa).

Belongs to the universal ribosomal protein uL3 family. Part of the 50S ribosomal subunit. Forms a cluster with proteins L14 and L19.

Functionally, one of the primary rRNA binding proteins, it binds directly near the 3'-end of the 23S rRNA, where it nucleates assembly of the 50S subunit. The sequence is that of Large ribosomal subunit protein uL3 from Mycobacterium sp. (strain KMS).